The chain runs to 67 residues: Large ribosomal subunit protein uL29 (67 aa).

The protein belongs to the universal ribosomal protein uL29 family.

This is Large ribosomal subunit protein uL29 from Clostridium acetobutylicum (strain ATCC 824 / DSM 792 / JCM 1419 / IAM 19013 / LMG 5710 / NBRC 13948 / NRRL B-527 / VKM B-1787 / 2291 / W).